Here is a 364-residue protein sequence, read N- to C-terminus: tRNA 2-selenouridine synthase (364 aa).

One can recognise a Rhodanese domain in the interval 14–137 (LIADTPIIDV…LRQTAIQATI (124 aa)). Catalysis depends on Cys97, which acts as the S-selanylcysteine intermediate.

Belongs to the SelU family. As to quaternary structure, monomer.

The catalysed reaction is 5-methylaminomethyl-2-thiouridine(34) in tRNA + selenophosphate + (2E)-geranyl diphosphate + H2O + H(+) = 5-methylaminomethyl-2-selenouridine(34) in tRNA + (2E)-thiogeraniol + phosphate + diphosphate. It catalyses the reaction 5-methylaminomethyl-2-thiouridine(34) in tRNA + (2E)-geranyl diphosphate = 5-methylaminomethyl-S-(2E)-geranyl-thiouridine(34) in tRNA + diphosphate. It carries out the reaction 5-methylaminomethyl-S-(2E)-geranyl-thiouridine(34) in tRNA + selenophosphate + H(+) = 5-methylaminomethyl-2-(Se-phospho)selenouridine(34) in tRNA + (2E)-thiogeraniol. The enzyme catalyses 5-methylaminomethyl-2-(Se-phospho)selenouridine(34) in tRNA + H2O = 5-methylaminomethyl-2-selenouridine(34) in tRNA + phosphate. In terms of biological role, involved in the post-transcriptional modification of the uridine at the wobble position (U34) of tRNA(Lys), tRNA(Glu) and tRNA(Gln). Catalyzes the conversion of 2-thiouridine (S2U-RNA) to 2-selenouridine (Se2U-RNA). Acts in a two-step process involving geranylation of 2-thiouridine (S2U) to S-geranyl-2-thiouridine (geS2U) and subsequent selenation of the latter derivative to 2-selenouridine (Se2U) in the tRNA chain. The polypeptide is tRNA 2-selenouridine synthase (Escherichia coli (strain K12 / MC4100 / BW2952)).